Here is a 188-residue protein sequence, read N- to C-terminus: Elongation factor P (188 aa).

Belongs to the elongation factor P family.

The protein resides in the cytoplasm. It functions in the pathway protein biosynthesis; polypeptide chain elongation. Involved in peptide bond synthesis. Stimulates efficient translation and peptide-bond synthesis on native or reconstituted 70S ribosomes in vitro. Probably functions indirectly by altering the affinity of the ribosome for aminoacyl-tRNA, thus increasing their reactivity as acceptors for peptidyl transferase. This chain is Elongation factor P, found in Wolbachia pipientis wMel.